The chain runs to 449 residues: Hyaluronidase-4 (449 aa).

The signal sequence occupies residues 1–23; the sequence is MYHIWIKFLAAWIFLKRFNGVHV. 2 disulfide bridges follow: Cys-47–Cys-340 and Cys-211–Cys-227. Residues Asn-67, Asn-103, and Asn-111 are each glycosylated (N-linked (GlcNAc...) asparagine). Residue Glu-135 is the Proton donor of the active site. N-linked (GlcNAc...) asparagine glycosylation is present at Asn-153. N-linked (GlcNAc...) asparagine glycosylation occurs at Asn-357. 3 disulfides stabilise this stretch: Cys-365/Cys-376, Cys-370/Cys-427, and Cys-429/Cys-438. N-linked (GlcNAc...) asparagine glycosylation occurs at Asn-401. The 12-residue stretch at 427-438 folds into the EGF-like domain; that stretch reads CQCYQGWKGLYC.

Belongs to the glycosyl hydrolase 56 family. As to quaternary structure, monomer. In terms of tissue distribution, expressed by the venom gland.

The protein resides in the secreted. The enzyme catalyses Random hydrolysis of (1-&gt;4)-linkages between N-acetyl-beta-D-glucosamine and D-glucuronate residues in hyaluronate.. In terms of biological role, snake venom endo-hyaluronidase that degrades hyaluronan to smaller oligosaccharide fragments. In venom, it is not toxic by itself, but increases the diffusion of other venom proteins by degrading the extracellular matrix. In addition, it displays antiedematogenic activity. The sequence is that of Hyaluronidase-4 from Cerastes cerastes (Horned desert viper).